Here is a 264-residue protein sequence, read N- to C-terminus: ATP synthase subunit a (264 aa).

The next 5 helical transmembrane spans lie at 39–59 (LDTL…FYIV), 97–117 (VAPL…MDLV), 139–159 (TADP…VIFY), 205–225 (LFGN…LPWW), and 239–259 (LLVI…YISL).

Belongs to the ATPase A chain family. In terms of assembly, F-type ATPases have 2 components, CF(1) - the catalytic core - and CF(0) - the membrane proton channel. CF(1) has five subunits: alpha(3), beta(3), gamma(1), delta(1), epsilon(1). CF(0) has three main subunits: a(1), b(2) and c(9-12). The alpha and beta chains form an alternating ring which encloses part of the gamma chain. CF(1) is attached to CF(0) by a central stalk formed by the gamma and epsilon chains, while a peripheral stalk is formed by the delta and b chains.

It is found in the cell inner membrane. Key component of the proton channel; it plays a direct role in the translocation of protons across the membrane. This chain is ATP synthase subunit a, found in Coxiella burnetii (strain CbuK_Q154) (Coxiella burnetii (strain Q154)).